The following is a 316-amino-acid chain: Homoserine O-succinyltransferase (316 aa).

C142 acts as the Acyl-thioester intermediate in catalysis. Substrate-binding residues include K163 and S192. H235 functions as the Proton acceptor in the catalytic mechanism. E237 is an active-site residue. R249 is a substrate binding site.

This sequence belongs to the MetA family.

The protein resides in the cytoplasm. It catalyses the reaction L-homoserine + succinyl-CoA = O-succinyl-L-homoserine + CoA. It functions in the pathway amino-acid biosynthesis; L-methionine biosynthesis via de novo pathway; O-succinyl-L-homoserine from L-homoserine: step 1/1. In terms of biological role, transfers a succinyl group from succinyl-CoA to L-homoserine, forming succinyl-L-homoserine. The protein is Homoserine O-succinyltransferase of Shewanella amazonensis (strain ATCC BAA-1098 / SB2B).